The chain runs to 122 residues: Protein 7a (122 aa).

Residues 1–15 (MKIILFLTLIALATC) form the signal peptide. The X4e domain occupies 16 to 81 (ELYHYQECVR…RHTYQLRARS (66 aa)). The Virion surface segment spans residues 16-96 (ELYHYQECVR…FIRQEEVYQE (81 aa)). Disulfide bonds link Cys23–Cys58 and Cys35–Cys67. Residues 97–117 (LYSPLFLIVAALVFIILCFTI) traverse the membrane as a helical segment. Over 118–122 (KRKTE) the chain is Intravirion. The Di-lysine motif motif lies at 118-122 (KRKTE).

As to quaternary structure, interacts with the spike glycoprotein, M protein, E protein and the accessory protein 3.

It is found in the virion. The protein resides in the host endoplasmic reticulum membrane. Its subcellular location is the host endoplasmic reticulum-Golgi intermediate compartment membrane. It localises to the host Golgi apparatus membrane. In terms of biological role, non-structural protein which is dispensable for virus replication in cell culture. This chain is Protein 7a, found in Bat coronavirus HKU3 (BtCoV).